The primary structure comprises 426 residues: Eukaryotic translation initiation factor 3 subunit M (426 aa).

The 172-residue stretch at 179-350 (DDEDSYRYLI…KVFLVHRTTY (172 aa)) folds into the PCI domain. Residues 385 to 401 (DVEGQREREQQELERKL) show a composition bias toward basic and acidic residues. A disordered region spans residues 385–426 (DVEGQREREQQELERKLAGAGMGGGPGGDRRRQQKPRTDEDD).

Belongs to the eIF-3 subunit M family. Component of the eukaryotic translation initiation factor 3 (eIF-3) complex.

Its subcellular location is the cytoplasm. Component of the eukaryotic translation initiation factor 3 (eIF-3) complex, which is involved in protein synthesis of a specialized repertoire of mRNAs and, together with other initiation factors, stimulates binding of mRNA and methionyl-tRNAi to the 40S ribosome. The eIF-3 complex specifically targets and initiates translation of a subset of mRNAs involved in cell proliferation. This is Eukaryotic translation initiation factor 3 subunit M from Chaetomium globosum (strain ATCC 6205 / CBS 148.51 / DSM 1962 / NBRC 6347 / NRRL 1970) (Soil fungus).